The chain runs to 529 residues: Cytochrome P450 monooxygenase CLM2 (529 aa).

The helical transmembrane segment at 2–19 (LLIIVVLVGTLIYFLSFH) threads the bilayer. Residues asparagine 244 and asparagine 281 are each glycosylated (N-linked (GlcNAc...) asparagine). Position 438 (cysteine 438) interacts with heme.

It belongs to the cytochrome P450 family. Requires heme as cofactor.

It localises to the membrane. The catalysed reaction is (-)-longiborneol + reduced [NADPH--hemoprotein reductase] + O2 = culmorin + oxidized [NADPH--hemoprotein reductase] + H2O + H(+). The protein operates within mycotoxin biosynthesis. Its function is as follows. Cytochrome P450 monooxygenase involved in the biosynthesis of culmorin, a tricyclic sesquiterpene diol reported to have antifungal activity and some phytotoxicity to wheat coleoptile tissue, contributing to Fusarium head blight disease. The terpene cyclase CLM1 is responsible for the cyclization of farnesyl diphosphate into the intermediate longiborneol. Longiborneol is then hydroxylated in a regio- and endo-stereoselective manner at position C-11 by the cytochrome P450 monooxygenase CLM2 to produce culmorin. Additional non-specific oxygenases are also able to hydroxylate longiborneol at other sites than C-11 leading to 3-hydroxylongiborneol, 5-hydroxylongiborneol, 12-hydroxylongiborneol and 15-hydroxylongiborneol. Moreover, another oxygenase capable of installing a C-11 exo-hydroxy group in longiborneol can also yield 11-epi-acetylculmorin. The production of these longiborneol derivatives is dwarfed by the high abundance of culmorin, suggesting that CLM2 displays superior enzymatic activity to the unidentified, possibly promiscuous, additional oxygenases. The sequence is that of Cytochrome P450 monooxygenase CLM2 from Gibberella zeae (strain ATCC MYA-4620 / CBS 123657 / FGSC 9075 / NRRL 31084 / PH-1) (Wheat head blight fungus).